The following is a 257-amino-acid chain: Thiazole synthase (257 aa).

The Schiff-base intermediate with DXP role is filled by lysine 96. Residues glycine 157, alanine 184 to glycine 185, and asparagine 206 to threonine 207 contribute to the 1-deoxy-D-xylulose 5-phosphate site.

The protein belongs to the ThiG family. In terms of assembly, homotetramer. Forms heterodimers with either ThiH or ThiS.

It localises to the cytoplasm. It catalyses the reaction [ThiS sulfur-carrier protein]-C-terminal-Gly-aminoethanethioate + 2-iminoacetate + 1-deoxy-D-xylulose 5-phosphate = [ThiS sulfur-carrier protein]-C-terminal Gly-Gly + 2-[(2R,5Z)-2-carboxy-4-methylthiazol-5(2H)-ylidene]ethyl phosphate + 2 H2O + H(+). The protein operates within cofactor biosynthesis; thiamine diphosphate biosynthesis. In terms of biological role, catalyzes the rearrangement of 1-deoxy-D-xylulose 5-phosphate (DXP) to produce the thiazole phosphate moiety of thiamine. Sulfur is provided by the thiocarboxylate moiety of the carrier protein ThiS. In vitro, sulfur can be provided by H(2)S. This Allorhizobium ampelinum (strain ATCC BAA-846 / DSM 112012 / S4) (Agrobacterium vitis (strain S4)) protein is Thiazole synthase.